Here is a 224-residue protein sequence, read N- to C-terminus: Zinc finger C4H2 domain-containing protein (224 aa).

Residues 12-97 (ENIKEIRNKT…NKLLESTRRL (86 aa)) are a coiled coil. 2 disordered regions span residues 166–185 (QAAR…QPPP) and 204–224 (PLCK…KPDE). A C4H2-type zinc finger spans residues 189-206 (CLSCHQQIHRNAPICPLC). Over residues 208–224 (AKSRSRNPKKPKRKPDE) the composition is skewed to basic residues.

It is found in the nucleus. The protein resides in the cytoplasm. Its subcellular location is the postsynaptic cell membrane. In terms of biological role, plays a role in GABAergic and V2 interneurons differentiation. Involved in motoneuron development and in neuromuscular junction formation. In Danio rerio (Zebrafish), this protein is Zinc finger C4H2 domain-containing protein (zc4h2).